We begin with the raw amino-acid sequence, 617 residues long: Electron transfer flavoprotein-ubiquinone oxidoreductase, mitochondrial (617 aa).

The N-terminal 33 residues, 1 to 33, are a transit peptide targeting the mitochondrion; the sequence is MLVPLAKLSCPAYQCFHALKIKKNYLPLCATRW. FAD is bound at residue 71–85; it reads VVIVGAGPAGLSAAV. At lysine 96 the chain carries N6-acetyllysine. The stretch at 109-130 is an intramembrane region; that stretch reads IGAHTLSGACLDPGAFKELFPD. N6-acetyllysine is present on residues lysine 132 and lysine 223. Positions 305 and 306 each coordinate a ubiquinone. Position 357 is an N6-acetyllysine (lysine 357). An intramembrane segment occupies 428–447; that stretch reads MGLHVTEYEDNLKNSWVWKE. Serine 551 bears the Phosphoserine mark. Residues cysteine 561, cysteine 586, cysteine 589, and cysteine 592 each coordinate [4Fe-4S] cluster. Residues 577 to 606 enclose the 4Fe-4S ferredoxin-type domain; the sequence is FRLQINAQNCVHCKTCDIKDPSQNINWVVP.

This sequence belongs to the ETF-QO/FixC family. Monomer. Requires [4Fe-4S] cluster as cofactor. FAD is required as a cofactor.

The protein localises to the mitochondrion inner membrane. The enzyme catalyses a ubiquinone + reduced [electron-transfer flavoprotein] = a ubiquinol + oxidized [electron-transfer flavoprotein] + H(+). Its function is as follows. Accepts electrons from ETF and reduces ubiquinone. The protein is Electron transfer flavoprotein-ubiquinone oxidoreductase, mitochondrial (ETFDH) of Pongo abelii (Sumatran orangutan).